The primary structure comprises 565 residues: Polyadenylate-binding protein 1-A (565 aa).

4 RRM domains span residues 10-88, 98-175, 188-265, and 284-362; these read SSLY…WSQR, GNVF…PFKS, TNVF…RAQK, and VNLY…LAQR. A disordered region spans residues 435 to 466; that stretch reads YARGQPRQNGPRQNGGQPRQNGPRPDVSGAQP. Over residues 440 to 454 the composition is skewed to polar residues; that stretch reads PRQNGPRQNGGQPRQ. Positions 489–565 constitute a PABC domain; the sequence is SALNLQSIIN…REALEVLGSN (77 aa).

The protein belongs to the polyadenylate-binding protein type-1 family.

Its subcellular location is the cytoplasm. It is found in the nucleus. Functionally, binds the poly(A) tail of mRNA. Appears to be an important mediator of the multiple roles of the poly(A) tail in mRNA biogenesis, stability and translation. The sequence is that of Polyadenylate-binding protein 1-A (pabpc1A) from Dictyostelium discoideum (Social amoeba).